A 442-amino-acid polypeptide reads, in one-letter code: Na(+)/H(+) antiporter NhaA (442 aa).

11 helical membrane-spanning segments follow: residues 32-52 (IGGG…NSPW), 73-93 (LTLA…VAGL), 111-131 (AVPV…YALV), 139-159 (AGWA…LAVI), 170-190 (FLLT…AVVY), 193-213 (HLSI…TLLV), 234-254 (VHAS…AVPV), 284-304 (VAVP…LSGL), 316-336 (VVLG…FLVA), 352-372 (VLGL…IGEL), and 383-403 (HVKI…AVVL). Over residues 423-435 (HDGIPDVYQDLHR) the composition is skewed to basic and acidic residues. Residues 423–442 (HDGIPDVYQDLHRSSPRPWG) are disordered.

This sequence belongs to the NhaA Na(+)/H(+) (TC 2.A.33) antiporter family.

It is found in the cell membrane. The catalysed reaction is Na(+)(in) + 2 H(+)(out) = Na(+)(out) + 2 H(+)(in). Its function is as follows. Na(+)/H(+) antiporter that extrudes sodium in exchange for external protons. The sequence is that of Na(+)/H(+) antiporter NhaA from Frankia casuarinae (strain DSM 45818 / CECT 9043 / HFP020203 / CcI3).